Here is a 668-residue protein sequence, read N- to C-terminus: Ubiquitin ligase complex F-box protein UFO1 (668 aa).

The F-box domain occupies 5–51; that stretch reads GLVLQDLPPEILINIFSHLDEKDLFTLQELSTHFRNLIHDEELWKNL. Serine 511 is modified (phosphoserine). Threonine 514 bears the Phosphothreonine mark. UIM domains follow at residues 547 to 566, 583 to 602, and 651 to 668; these read DEDE…YETQ, EDDE…DERR, and NVDE…SEIN. A compositionally biased stretch (polar residues) spans 564-578; it reads ETQTNSSANHGNNTN. 2 disordered regions span residues 564 to 585 and 599 to 639; these read ETQT…DEDD and DERR…TENT.

In terms of assembly, interacts with SKP1. Component of the probable SCF(UFO1) complex containing CDC53, SKP1, RBX1 and UFO1.

It functions in the pathway protein modification; protein ubiquitination. Its function is as follows. Substrate recognition component of a SCF (SKP1-CUL1-F-box protein) E3 ubiquitin-protein ligase complex which mediates the ubiquitination and subsequent proteasomal degradation of target proteins. Probably recognizes and binds to phosphorylated target proteins. This is Ubiquitin ligase complex F-box protein UFO1 (UFO1) from Saccharomyces cerevisiae (strain ATCC 204508 / S288c) (Baker's yeast).